The chain runs to 139 residues: MANAASGMAVHDDCKLRFLELKAKRTHRFIVYKIEEKQKQVVVEKIGEPTESYEDFAASLPENECRYAVYDFDFVTAENCQKSRIFFIAWCPDTARVRSKMIYASSKDRFKRELDGIQVELQACDPTEMGLDVIQSRAN.

The 135-residue stretch at 5 to 139 folds into the ADF-H domain; that stretch reads ASGMAVHDDC…GLDVIQSRAN (135 aa).

This sequence belongs to the actin-binding proteins ADF family.

Its function is as follows. Actin-depolymerizing protein. Severs actin filaments (F-actin) and binds to actin monomers. This chain is Actin-depolymerizing factor 1 (ADF1), found in Petunia hybrida (Petunia).